A 141-amino-acid polypeptide reads, in one-letter code: Pheromone-binding protein-related protein 6 (141 aa).

A signal peptide spans 1-16 (MVKYPLILLLIGCAAA). Cystine bridges form between cysteine 41/cysteine 72, cysteine 68/cysteine 120, and cysteine 111/cysteine 129.

Belongs to the PBP/GOBP family. As to expression, antenna. Mostly expressed in two types of sensory hairs, sensilla trichodea and small sensilla basiconica, in the ventro-lateral region of the third antennal segment (at protein level).

It is found in the secreted. The sequence is that of Pheromone-binding protein-related protein 6 (Obp83b) from Drosophila melanogaster (Fruit fly).